The sequence spans 304 residues: dTDP-4-dehydrorhamnose reductase (304 aa).

NADH contacts are provided by residues 15–17 (GQL), 41–42 (DI), and 63–65 (AYT). Residues 16–17 (QL), 41–42 (DI), and 63–65 (AYT) contribute to the NADPH site. Residue 104–105 (TD) participates in dTDP-beta-L-rhamnose binding. NADH contacts are provided by tyrosine 132 and lysine 136. NADPH contacts are provided by tyrosine 132 and lysine 136. Tyrosine 132 acts as the Proton donor/acceptor in catalysis. Tryptophan 157 serves as a coordination point for dTDP-beta-L-rhamnose.

Belongs to the dTDP-4-dehydrorhamnose reductase family. It depends on Mg(2+) as a cofactor.

The enzyme catalyses dTDP-beta-L-rhamnose + NADP(+) = dTDP-4-dehydro-beta-L-rhamnose + NADPH + H(+). It participates in carbohydrate biosynthesis; dTDP-L-rhamnose biosynthesis. Involved in the biosynthesis of the dTDP-L-rhamnose which is a component of the critical linker, D-N-acetylglucosamine-L-rhamnose disaccharide, which connects the galactan region of arabinogalactan to peptidoglycan via a phosphodiester linkage. Catalyzes the reduction of dTDP-6-deoxy-L-lyxo-4-hexulose to yield dTDP-L-rhamnose. This chain is dTDP-4-dehydrorhamnose reductase, found in Mycobacterium tuberculosis (strain CDC 1551 / Oshkosh).